We begin with the raw amino-acid sequence, 125 residues long: Histone H2A (125 aa).

Positions Met1–Ser18 are enriched in basic residues. The tract at residues Met1–Ala21 is disordered. Ser2 is modified (N-acetylserine). Gln104 bears the N5-methylglutamine mark.

This sequence belongs to the histone H2A family. The nucleosome is a histone octamer containing two molecules each of H2A, H2B, H3 and H4 assembled in one H3-H4 heterotetramer and two H2A-H2B heterodimers. The octamer wraps approximately 147 bp of DNA.

Its subcellular location is the nucleus. It is found in the chromosome. Core component of nucleosome. Nucleosomes wrap and compact DNA into chromatin, limiting DNA accessibility to the cellular machineries which require DNA as a template. Histones thereby play a central role in transcription regulation, DNA repair, DNA replication and chromosomal stability. DNA accessibility is regulated via a complex set of post-translational modifications of histones, also called histone code, and nucleosome remodeling. This chain is Histone H2A, found in Mytilus trossulus (Blue mussel).